The primary structure comprises 131 residues: Arsenate reductase (131 aa).

Residues Cys10, Cys82, and Cys89 each act as nucleophile in the active site. 2 disulfide bridges follow: Cys10/Cys82 and Cys82/Cys89.

It belongs to the low molecular weight phosphotyrosine protein phosphatase family. Thioredoxin-coupled ArsC subfamily.

The protein resides in the cytoplasm. It catalyses the reaction arsenate + [thioredoxin]-dithiol + H(+) = arsenite + [thioredoxin]-disulfide + H2O. In terms of biological role, catalyzes the reduction of arsenate [As(V)] to arsenite [As(III)]. This chain is Arsenate reductase, found in Staphylococcus xylosus.